The chain runs to 375 residues: tRNA-specific 2-thiouridylase MnmA (375 aa).

ATP contacts are provided by residues 7–14 (GLSGGVDS) and M33. An interaction with target base in tRNA region spans residues 102-104 (NPD). C107 functions as the Nucleophile in the catalytic mechanism. C107 and C205 form a disulfide bridge. G132 contributes to the ATP binding site. The segment at 155–157 (KDQ) is interaction with tRNA. C205 functions as the Cysteine persulfide intermediate in the catalytic mechanism. The interval 313–314 (RY) is interaction with tRNA.

Belongs to the MnmA/TRMU family.

It is found in the cytoplasm. It catalyses the reaction S-sulfanyl-L-cysteinyl-[protein] + uridine(34) in tRNA + AH2 + ATP = 2-thiouridine(34) in tRNA + L-cysteinyl-[protein] + A + AMP + diphosphate + H(+). Functionally, catalyzes the 2-thiolation of uridine at the wobble position (U34) of tRNA, leading to the formation of s(2)U34. The polypeptide is tRNA-specific 2-thiouridylase MnmA (Phytoplasma australiense).